A 248-amino-acid chain; its full sequence is Tabinhibitin 10 (248 aa).

A signal peptide spans 1-22; sequence MTLKRIFCAALALIVLQSVASA. The SCP domain occupies 66–208; that stretch reads LQKTNWLRGV…NYKGAFHCSL (143 aa). The short motif at 221–223 is the Cell attachment site element; that stretch reads RGD.

This sequence belongs to the CRISP family. In terms of tissue distribution, expressed in salivary glands.

The protein resides in the secreted. In terms of biological role, inhibits platelet aggregation induced by all agonists tested (ADP, arachidonic acid, the thromboxane A2 analog U46619, thrombin, and snake venom snaclecs (TMVA that activates platelet through GPIB, and stejnulxin that specifically acts through GPVI (GP6))). May act by competing with fibrinogen for binding to glycoprotein IIb/IIIa (ITGA2B/ITGB3). This Tabanus yao (Horsefly) protein is Tabinhibitin 10.